A 170-amino-acid chain; its full sequence is uncharacterized protein (170 aa).

The Ferritin-like diiron domain maps to 1–148; the sequence is MVKSQKVIDV…TIHDFFENAT (148 aa).

This is an uncharacterized protein from Ureaplasma parvum serovar 3 (strain ATCC 700970).